The sequence spans 275 residues: NH(3)-dependent NAD(+) synthetase (275 aa).

46-53 (GISGGQDS) is a binding site for ATP. Residue Asp52 participates in Mg(2+) binding. Arg140 lines the deamido-NAD(+) pocket. Thr160 serves as a coordination point for ATP. Residue Glu165 participates in Mg(2+) binding. Deamido-NAD(+) is bound by residues Lys173 and Asp180. Lys189 and Thr211 together coordinate ATP. 260–261 (HK) is a binding site for deamido-NAD(+).

Belongs to the NAD synthetase family. As to quaternary structure, homodimer.

The catalysed reaction is deamido-NAD(+) + NH4(+) + ATP = AMP + diphosphate + NAD(+) + H(+). Its pathway is cofactor biosynthesis; NAD(+) biosynthesis; NAD(+) from deamido-NAD(+) (ammonia route): step 1/1. Catalyzes the ATP-dependent amidation of deamido-NAD to form NAD. Uses ammonia as a nitrogen source. The sequence is that of NH(3)-dependent NAD(+) synthetase from Salmonella choleraesuis (strain SC-B67).